The sequence spans 228 residues: Probable methylthioribulose-1-phosphate dehydratase (228 aa).

Cys87 contributes to the substrate binding site. Positions 105 and 107 each coordinate Zn(2+). The active-site Proton donor/acceptor is Glu129. His185 contributes to the Zn(2+) binding site.

It belongs to the aldolase class II family. MtnB subfamily. Zn(2+) is required as a cofactor.

Its subcellular location is the cytoplasm. It carries out the reaction 5-(methylsulfanyl)-D-ribulose 1-phosphate = 5-methylsulfanyl-2,3-dioxopentyl phosphate + H2O. It participates in amino-acid biosynthesis; L-methionine biosynthesis via salvage pathway; L-methionine from S-methyl-5-thio-alpha-D-ribose 1-phosphate: step 2/6. Its function is as follows. Catalyzes the dehydration of methylthioribulose-1-phosphate (MTRu-1-P) into 2,3-diketo-5-methylthiopentyl-1-phosphate (DK-MTP-1-P). The polypeptide is Probable methylthioribulose-1-phosphate dehydratase (Drosophila willistoni (Fruit fly)).